The primary structure comprises 31 residues: Kallikrein-1 (31 aa).

Positions 1-31 (VIGGQECARDSHPWQAAVYHFSDIECGGVLV) constitute a Peptidase S1 domain.

Belongs to the peptidase S1 family. Kallikrein subfamily.

The enzyme catalyses Preferential cleavage of Arg-|-Xaa bonds in small molecule substrates. Highly selective action to release kallidin (lysyl-bradykinin) from kininogen involves hydrolysis of Met-|-Xaa or Leu-|-Xaa.. Glandular kallikreins cleave Met-Lys and Arg-Ser bonds in kininogen to release Lys-bradykinin. In Cavia porcellus (Guinea pig), this protein is Kallikrein-1.